A 198-amino-acid polypeptide reads, in one-letter code: Na(+)-translocating NADH-quinone reductase subunit E (198 aa).

The next 6 membrane-spanning stretches (helical) occupy residues 11 to 31 (AVFV…FLAV), 35 to 55 (VSTA…SVPA), 77 to 97 (FLNF…LEMI), 109 to 129 (LGIF…VSFM), 140 to 160 (IVYG…LAGI), and 176 to 196 (LGIT…FAGV).

It belongs to the NqrDE/RnfAE family. As to quaternary structure, composed of six subunits; NqrA, NqrB, NqrC, NqrD, NqrE and NqrF.

It localises to the cell inner membrane. It catalyses the reaction a ubiquinone + n Na(+)(in) + NADH + H(+) = a ubiquinol + n Na(+)(out) + NAD(+). In terms of biological role, NQR complex catalyzes the reduction of ubiquinone-1 to ubiquinol by two successive reactions, coupled with the transport of Na(+) ions from the cytoplasm to the periplasm. NqrA to NqrE are probably involved in the second step, the conversion of ubisemiquinone to ubiquinol. The chain is Na(+)-translocating NADH-quinone reductase subunit E from Yersinia pestis bv. Antiqua (strain Nepal516).